We begin with the raw amino-acid sequence, 193 residues long: 3-isopropylmalate dehydratase small subunit (193 aa).

This sequence belongs to the LeuD family. LeuD type 1 subfamily. Heterodimer of LeuC and LeuD.

The enzyme catalyses (2R,3S)-3-isopropylmalate = (2S)-2-isopropylmalate. Its pathway is amino-acid biosynthesis; L-leucine biosynthesis; L-leucine from 3-methyl-2-oxobutanoate: step 2/4. Catalyzes the isomerization between 2-isopropylmalate and 3-isopropylmalate, via the formation of 2-isopropylmaleate. The chain is 3-isopropylmalate dehydratase small subunit from Bacillus cereus (strain 03BB102).